The following is a 409-amino-acid chain: S-adenosylmethionine synthase (409 aa).

Residue His-15 coordinates ATP. Residue Asp-17 coordinates Mg(2+). Glu-43 serves as a coordination point for K(+). Positions 56 and 100 each coordinate L-methionine. Residues 100–110 (QSSDIAQGVNE) form a flexible loop region. Residues 171–173 (DGK), 248–249 (KF), Asp-257, 263–264 (RK), Ala-280, and Lys-284 each bind ATP. Asp-257 contributes to the L-methionine binding site. Position 288 (Lys-288) interacts with L-methionine.

Belongs to the AdoMet synthase family. In terms of assembly, homotetramer; dimer of dimers. Mg(2+) is required as a cofactor. K(+) serves as cofactor.

The protein resides in the cytoplasm. The enzyme catalyses L-methionine + ATP + H2O = S-adenosyl-L-methionine + phosphate + diphosphate. The protein operates within amino-acid biosynthesis; S-adenosyl-L-methionine biosynthesis; S-adenosyl-L-methionine from L-methionine: step 1/1. Functionally, catalyzes the formation of S-adenosylmethionine (AdoMet) from methionine and ATP. The overall synthetic reaction is composed of two sequential steps, AdoMet formation and the subsequent tripolyphosphate hydrolysis which occurs prior to release of AdoMet from the enzyme. The chain is S-adenosylmethionine synthase from Prochlorococcus marinus (strain NATL1A).